Here is a 115-residue protein sequence, read N- to C-terminus: NADH-ubiquinone oxidoreductase chain 3 (115 aa).

A run of 3 helical transmembrane segments spans residues 4–24 (LTAL…AFWL), 55–75 (FFLV…LLPL), and 86–106 (VMML…AYEW).

It belongs to the complex I subunit 3 family. In terms of assembly, core subunit of respiratory chain NADH dehydrogenase (Complex I) which is composed of 45 different subunits. Interacts with TMEM186. Interacts with TMEM242.

It is found in the mitochondrion inner membrane. The catalysed reaction is a ubiquinone + NADH + 5 H(+)(in) = a ubiquinol + NAD(+) + 4 H(+)(out). Functionally, core subunit of the mitochondrial membrane respiratory chain NADH dehydrogenase (Complex I) which catalyzes electron transfer from NADH through the respiratory chain, using ubiquinone as an electron acceptor. Essential for the catalytic activity of complex I. The protein is NADH-ubiquinone oxidoreductase chain 3 of Isthmomys pirrensis (Mount Pirri Isthmus rat).